The chain runs to 140 residues: Envelope protein A28 homolog (140 aa).

Residues 1 to 21 (MNAITIFFIILSTVAVCIIIF) traverse the membrane as a helical; Signal-anchor for type II membrane protein segment. Over 22–140 (QLYSIYLNYD…KECIFLKSMF (119 aa)) the chain is Virion surface.

It belongs to the poxviridae A28 protein family. Post-translationally, contains two intramolecular disulfide bonds. They are created by the viral disulfide bond formation pathway, a poxvirus-specific pathway that operates on the cytoplasmic side of the MV membranes.

Its subcellular location is the virion membrane. In terms of biological role, envelope protein required for virus entry into host cell and for cell-cell fusion (syncytium formation). In Bos taurus (Bovine), this protein is Envelope protein A28 homolog.